Consider the following 390-residue polypeptide: Digeranylgeranylglycerophospholipid reductase (390 aa).

FAD-binding residues include A18, E37, C48, A49, A51, R98, V122, D278, G290, and I291. A 2,3-bis-O-(geranylgeranyl)-sn-glycerol 1-phospholipid is bound at residue V368.

This sequence belongs to the geranylgeranyl reductase family. DGGGPL reductase subfamily. It depends on FAD as a cofactor.

It carries out the reaction a 2,3-bis-O-phytanyl-sn-glycerol 1-phospholipid + 8 A = a 2,3-bis-O-(geranylgeranyl)-sn-glycerol 1-phospholipid + 8 AH2. The enzyme catalyses 2,3-bis-O-(phytanyl)-sn-glycerol 1-phosphate + 8 A = 2,3-bis-O-(geranylgeranyl)-sn-glycerol 1-phosphate + 8 AH2. The catalysed reaction is CDP-2,3-bis-O-(geranylgeranyl)-sn-glycerol + 8 AH2 = CDP-2,3-bis-O-(phytanyl)-sn-glycerol + 8 A. It catalyses the reaction archaetidylserine + 8 AH2 = 2,3-bis-O-phytanyl-sn-glycero-3-phospho-L-serine + 8 A. It functions in the pathway membrane lipid metabolism; glycerophospholipid metabolism. Is involved in the reduction of 2,3-digeranylgeranylglycerophospholipids (unsaturated archaeols) into 2,3-diphytanylglycerophospholipids (saturated archaeols) in the biosynthesis of archaeal membrane lipids. Catalyzes the formation of archaetidic acid (2,3-di-O-phytanyl-sn-glyceryl phosphate) from 2,3-di-O-geranylgeranylglyceryl phosphate (DGGGP) via the hydrogenation of each double bond of the isoprenoid chains. Is also probably able to reduce double bonds of geranyl groups in CDP-2,3-bis-O-(geranylgeranyl)-sn-glycerol and archaetidylserine, thus acting at various stages in the biosynthesis of archaeal membrane lipids. This is Digeranylgeranylglycerophospholipid reductase from Methanococcus vannielii (strain ATCC 35089 / DSM 1224 / JCM 13029 / OCM 148 / SB).